Reading from the N-terminus, the 690-residue chain is MSETNTGTPVVTFEGSPYRLHQPFPPAGDQPEAIRQLVEGLDDGLSFQTLLGVTGSGKTYTMANVIARTGRPALVLAPNKTLAAQLYSEFKEFFPENSVEYFVSYYDYYQPEAYVPSRDLFIEKDSSINDHIEQMRLSATKSLIERRDVVIVATVSCIYGIGDRDEYHNMILTMRVGDKLDQRAIVKRLTDMQYERNEMDFHRGTFRVRGDIIDIFPAEHAEHAIRISLFDDEVEGMQFFDPLTGHLLHKALRFTVFPASHYVTPRATVLRAVEAIKDELRERIDFFTRNNKLVEAQRIEQRTRFDLEMLDQIGFCKGIENYSRHFSGRKAGESPPTLIDYLPPDALMFIDESHVSIGQVGGMYKGDRSRKENLVDYGFRLPSALDNRPLQFNEFEAHMRQTIFVSATPADYEQQHAGQVVEQVARPTGLIDPEVIVRPASTQVDDLLAEIGKRIAVGERVLVTTLTKRMSEDLTDFLADNGIKVRYLHSDIDTVERVEIIRDLRLGEFDVLVGINLLREGLDIPEVSLVAILDADKEGFLRSERSLIQTIGRAARHIHGTAILYADTVTQSMQRAIAETGRRREKQIAFNLEHGITPRGVSKKIKDIIDGVYDAGSAQTELKAAQQRAAYDAMDEKAVAREIKRLEKSMMECAKNLEFEKAAAARDDLFRLRERVFGAAQHDLDGDGTK.

A Helicase ATP-binding domain is found at 39 to 422; it reads EGLDDGLSFQ…EQQHAGQVVE (384 aa). 52–59 serves as a coordination point for ATP; that stretch reads GVTGSGKT. The Beta-hairpin motif lies at 105-128; sequence YYDYYQPEAYVPSRDLFIEKDSSI. Positions 443–596 constitute a Helicase C-terminal domain; sequence QVDDLLAEIG…QIAFNLEHGI (154 aa). The UVR domain occupies 640–675; it reads AREIKRLEKSMMECAKNLEFEKAAAARDDLFRLRER.

This sequence belongs to the UvrB family. As to quaternary structure, forms a heterotetramer with UvrA during the search for lesions. Interacts with UvrC in an incision complex.

It localises to the cytoplasm. The UvrABC repair system catalyzes the recognition and processing of DNA lesions. A damage recognition complex composed of 2 UvrA and 2 UvrB subunits scans DNA for abnormalities. Upon binding of the UvrA(2)B(2) complex to a putative damaged site, the DNA wraps around one UvrB monomer. DNA wrap is dependent on ATP binding by UvrB and probably causes local melting of the DNA helix, facilitating insertion of UvrB beta-hairpin between the DNA strands. Then UvrB probes one DNA strand for the presence of a lesion. If a lesion is found the UvrA subunits dissociate and the UvrB-DNA preincision complex is formed. This complex is subsequently bound by UvrC and the second UvrB is released. If no lesion is found, the DNA wraps around the other UvrB subunit that will check the other stand for damage. The sequence is that of UvrABC system protein B from Dechloromonas aromatica (strain RCB).